A 445-amino-acid polypeptide reads, in one-letter code: Histamine H3 receptor (445 aa).

Residues 1–39 (MERAPPDGPLNASGALAGEAAAAGGARGFSAAWTAVLAA) are Extracellular-facing. An N-linked (GlcNAc...) asparagine glycan is attached at Asn-11. Residues 40 to 60 (LMALLIVATVLGNALVMLAFV) traverse the membrane as a helical segment. Over 61–70 (ADSSLRTQNN) the chain is Cytoplasmic. The chain crosses the membrane as a helical span at residues 71–91 (FFLLNLAISDFLVGAFCIPLY). The Extracellular segment spans residues 92-108 (VPYVLTGRWTFGRGLCK). A disulfide bridge links Cys-107 with Cys-188. Residues 109 to 129 (LWLVVDYLLCTSSAFNIVLIS) form a helical membrane-spanning segment. Topologically, residues 130 to 156 (YDRFLSVTRAVSYRAQQGDTRRAVRKM) are cytoplasmic. Residues 157–177 (LLVWVLAFLLYGPAILSWEYL) traverse the membrane as a helical segment. The Extracellular segment spans residues 178-196 (SGGSSIPEGHCYAEFFYNW). Residues 197-217 (YFLITASTLEFFTPFLSVTFF) form a helical membrane-spanning segment. The Cytoplasmic portion of the chain corresponds to 218–359 (NLSIYLNIQR…LSRDRKVAKS (142 aa)). Disordered stretches follow at residues 237–260 (REAAGPEPPPEAQPSPPPPPGCWG) and 288–336 (EATL…LEKR). The segment covering 242-257 (PEPPPEAQPSPPPPPG) has biased composition (pro residues). A compositionally biased stretch (gly residues) spans 290–299 (TLGGGGGGGS). The span at 300–312 (VASPTSSSGSSSR) shows a compositional bias: low complexity. Residues 360-380 (LAVIVSIFGLCWAPYTLLMII) traverse the membrane as a helical segment. Residues 381–395 (RAACHGHCVPDYWYE) lie on the Extracellular side of the membrane. Residues 396–416 (TSFWLLWANSAVNPVLYPLCH) traverse the membrane as a helical segment. At 417-445 (HSFRRAFTKLLCPQKLKIQPHSSLEHCWK) the chain is on the cytoplasmic side. Position 439 is a phosphoserine (Ser-439).

Belongs to the G-protein coupled receptor 1 family. Expressed predominantly in the CNS, with the greatest expression in the thalamus and caudate nucleus. The various isoforms are mainly coexpressed in brain, but their relative expression level varies in a region-specific manner. Isoform 3 and isoform 7 are highly expressed in the thalamus, caudate nucleus and cerebellum while isoform 5 and isoform 6 show a poor expression. Isoform 5 and isoform 6 show a high expression in the amygdala, substantia nigra, cerebral cortex and hypothalamus. Isoform 7 is not found in hypothalamus or substantia nigra.

Its subcellular location is the cell membrane. In terms of biological role, the H3 subclass of histamine receptors could mediate the histamine signals in CNS and peripheral nervous system. Signals through the inhibition of adenylate cyclase and displays high constitutive activity (spontaneous activity in the absence of agonist). Agonist stimulation of isoform 3 neither modified adenylate cyclase activity nor induced intracellular calcium mobilization. The sequence is that of Histamine H3 receptor (HRH3) from Homo sapiens (Human).